The chain runs to 226 residues: V-type proton ATPase subunit E (226 aa).

It belongs to the V-ATPase E subunit family. V-ATPase is a heteromultimeric enzyme composed of a peripheral catalytic V1 complex (components A to H) attached to an integral membrane V0 proton pore complex (components: a, c, c', c'' and d).

Its function is as follows. Subunit of the peripheral V1 complex of vacuolar ATPase essential for assembly or catalytic function. V-ATPase is responsible for acidifying a variety of intracellular compartments in eukaryotic cells. The chain is V-type proton ATPase subunit E (VATE) from Mesembryanthemum crystallinum (Common ice plant).